The sequence spans 368 residues: High affinity iron permease 1 (368 aa).

The next 7 membrane-spanning stretches (helical) occupy residues 8 to 28, 50 to 70, 86 to 106, 142 to 162, 173 to 193, 204 to 224, and 287 to 307; these read VPIF…ISVL, VWIG…AFIA, IWEG…GLAM, AFFV…VVFI, SIPI…FLIY, FFVF…AKGV, and SIIS…FSYF. A disordered region spans residues 346–368; the sequence is DKESDEEANNHPKEKIESDAIKA. A compositionally biased stretch (basic and acidic residues) spans 353-368; sequence ANNHPKEKIESDAIKA.

Belongs to the oxidase-dependent Fe transporter (OFeT) (TC 9.A.10.1) family.

The protein localises to the cell membrane. In terms of biological role, high affinity iron permease required for iron uptake in iron-depleted environments. Required for full virulence in mice. This Rhizopus delemar (strain RA 99-880 / ATCC MYA-4621 / FGSC 9543 / NRRL 43880) (Mucormycosis agent) protein is High affinity iron permease 1.